We begin with the raw amino-acid sequence, 232 residues long: Gene 65 protein (232 aa).

The protein is Gene 65 protein (65) of Mycobacterium phage D29 (Mycobacteriophage D29).